Here is a 428-residue protein sequence, read N- to C-terminus: Glutamyl-tRNA reductase (428 aa).

Residues 49-52 (TCNR), S109, 114-116 (EGQ), and Q120 each bind substrate. C50 (nucleophile) is an active-site residue. 189-194 (GAGKMS) lines the NADP(+) pocket.

Belongs to the glutamyl-tRNA reductase family. As to quaternary structure, homodimer.

It carries out the reaction (S)-4-amino-5-oxopentanoate + tRNA(Glu) + NADP(+) = L-glutamyl-tRNA(Glu) + NADPH + H(+). It functions in the pathway porphyrin-containing compound metabolism; protoporphyrin-IX biosynthesis; 5-aminolevulinate from L-glutamyl-tRNA(Glu): step 1/2. The protein operates within porphyrin-containing compound metabolism; chlorophyll biosynthesis. Its function is as follows. Catalyzes the NADPH-dependent reduction of glutamyl-tRNA(Glu) to glutamate 1-semialdehyde (GSA). This chain is Glutamyl-tRNA reductase, found in Microcystis aeruginosa (strain NIES-843 / IAM M-2473).